We begin with the raw amino-acid sequence, 562 residues long: ATP synthase subunit beta, mitochondrial (562 aa).

2 stretches are compositionally biased toward low complexity: residues 1 to 13 (MASR…LLRS) and 20 to 40 (SKSP…SSKS). 2 disordered regions span residues 1–43 (MASR…SRAS) and 58–83 (SAAA…KITD). The N-terminal 55 residues, 1–55 (MASRRLLSSLLRSSSRRSVSKSPISNINPKLSSSSPSSKSRASPYGYLLTRAAEY), are a transit peptide targeting the mitochondrion. 237-244 (GGAGVGKT) contributes to the ATP binding site.

This sequence belongs to the ATPase alpha/beta chains family. In terms of assembly, F-type ATPases have 2 components, CF(1) - the catalytic core - and CF(0) - the membrane proton channel. CF(1) has five subunits: alpha(3), beta(3), gamma(1), delta(1), epsilon(1). CF(0) has three main subunits: a, b and c.

The protein resides in the mitochondrion. It localises to the mitochondrion inner membrane. The catalysed reaction is ATP + H2O + 4 H(+)(in) = ADP + phosphate + 5 H(+)(out). Functionally, mitochondrial membrane ATP synthase (F(1)F(0) ATP synthase or Complex V) produces ATP from ADP in the presence of a proton gradient across the membrane which is generated by electron transport complexes of the respiratory chain. F-type ATPases consist of two structural domains, F(1) - containing the extramembraneous catalytic core, and F(0) - containing the membrane proton channel, linked together by a central stalk and a peripheral stalk. During catalysis, ATP synthesis in the catalytic domain of F(1) is coupled via a rotary mechanism of the central stalk subunits to proton translocation. Subunits alpha and beta form the catalytic core in F(1). Rotation of the central stalk against the surrounding alpha(3)beta(3) subunits leads to hydrolysis of ATP in three separate catalytic sites on the beta subunits. The polypeptide is ATP synthase subunit beta, mitochondrial (ATPB) (Hevea brasiliensis (Para rubber tree)).